Consider the following 122-residue polypeptide: MARIAGIDLPRNKRIEIALTYIYGIGRSTAQKILADAGVDSNTRSDNLTESEIARIRENIDKNVKVEGDLRRDISMNIKRLMDLGCYRGLRHRKGLPVHGQRTKTNARTRKGPARTVAGKKK.

The interval 95-122 is disordered; the sequence is GLPVHGQRTKTNARTRKGPARTVAGKKK.

Belongs to the universal ribosomal protein uS13 family. Part of the 30S ribosomal subunit. Forms a loose heterodimer with protein S19. Forms two bridges to the 50S subunit in the 70S ribosome.

Its function is as follows. Located at the top of the head of the 30S subunit, it contacts several helices of the 16S rRNA. In the 70S ribosome it contacts the 23S rRNA (bridge B1a) and protein L5 of the 50S subunit (bridge B1b), connecting the 2 subunits; these bridges are implicated in subunit movement. Contacts the tRNAs in the A and P-sites. The sequence is that of Small ribosomal subunit protein uS13 from Geotalea uraniireducens (strain Rf4) (Geobacter uraniireducens).